Here is a 798-residue protein sequence, read N- to C-terminus: Integrin beta-1 (798 aa).

Positions 1 to 20 are cleaved as a signal peptide; the sequence is MNLQPIFWIGLISSICCVFA. Residues 26-76 form the PSI domain; that stretch reads RCLKANAKSCGECIQAGPNCGWCTNSTFLQEGMPTSARCDDLEALKKKGCP. Intrachain disulfides connect Cys-27–Cys-45, Cys-35–Cys-464, Cys-38–Cys-64, Cys-48–Cys-75, Cys-207–Cys-213, Cys-261–Cys-301, Cys-401–Cys-415, Cys-435–Cys-462, Cys-466–Cys-486, Cys-477–Cys-489, Cys-491–Cys-500, Cys-502–Cys-533, Cys-516–Cys-531, Cys-525–Cys-536, Cys-538–Cys-553, Cys-555–Cys-576, Cys-560–Cys-574, Cys-568–Cys-579, Cys-581–Cys-590, Cys-592–Cys-615, Cys-599–Cys-613, Cys-607–Cys-618, Cys-620–Cys-630, Cys-633–Cys-636, Cys-640–Cys-691, Cys-646–Cys-665, Cys-649–Cys-661, and Cys-699–Cys-723. Asn-50 carries N-linked (GlcNAc...) asparagine glycosylation. The disordered stretch occupies residues 75-107; that stretch reads CPPDDIENPRGSKDIKKNKNVTNRSKGTAEKLK. Residues 81 to 91 show a composition bias toward basic and acidic residues; that stretch reads ENPRGSKDIKK. Asn-94 and Asn-97 each carry an N-linked (GlcNAc...) asparagine glycan. Residues 140–378 enclose the VWFA domain; it reads DYPIDLYYLM…QLIIDAYNSL (239 aa). Mg(2+)-binding residues include Ser-152 and Ser-154. Ca(2+) contacts are provided by Ser-154, Asp-157, Asp-158, and Glu-189. The segment at 207 to 213 is CX3CL1-binding; it reads CTSEQNC. The N-linked (GlcNAc...) asparagine glycan is linked to Asn-212. Residues Asn-244, Asp-246, Pro-248, and Glu-249 each contribute to the Ca(2+) site. Mg(2+) is bound at residue Glu-249. N-linked (GlcNAc...) asparagine glycosylation occurs at Asn-269. The CX3CL1-binding stretch occupies residues 295–314; sequence LPNDGQCHLENNMYTMSHYY. A Ca(2+)-binding site is contributed by Ala-362. 3 N-linked (GlcNAc...) asparagine glycosylation sites follow: Asn-363, Asn-406, and Asn-417. The interaction with TMEM182 stretch occupies residues 383-465; it reads ILENSKLSEG…VILQYICECE (83 aa). 4 I-EGF domains span residues 466-501, 502-554, 555-591, and 592-631; these read CQSE…RHCE, CSTD…KFCE, CDNF…SACD, and CSLD…QTCE. N-linked (GlcNAc...) asparagine glycosylation occurs at Asn-481. Asn-520 is a glycosylation site (N-linked (GlcNAc...) asparagine). A glycan (N-linked (GlcNAc...) asparagine) is linked at Asn-584. An N-linked (GlcNAc...) asparagine glycan is attached at Asn-669. A helical transmembrane segment spans residues 729–749; it reads IIPIVAGVVAGIVLIGLALLL. The tract at residues 762–767 is signal for sorting from recycling endosomes; interaction with ACAP1; the sequence is EFAKFE. Thr-777 bears the Phosphothreonine mark. A Phosphotyrosine modification is found at Tyr-783. Position 785 is a phosphoserine (Ser-785). Residues 785 to 792 are interaction with ITGB1BP1; it reads SAVTTVVN. The residue at position 789 (Thr-789) is a Phosphothreonine. Residue Lys-794 is modified to N6-acetyllysine; alternate. Residue Lys-794 forms a Glycyl lysine isopeptide (Lys-Gly) (interchain with G-Cter in SUMO1); alternate linkage.

Belongs to the integrin beta chain family. Interacts with seprase FAP (seprase); the interaction occurs at the cell surface of invadopodia membrane in a collagen-dependent manner. Heterodimer of an alpha and a beta subunit. Beta-1 associates with either alpha-1, alpha-2, alpha-3, alpha-4, alpha-5, alpha-6, alpha-7, alpha-8, alpha-9, alpha-10, alpha-11 or alpha-V. ITGA6:ITGB1 is found in a complex with CD9; interaction takes place in oocytes and is involved in sperm-egg fusion. Binds LGALS3BP and NMRK2, when associated with alpha-7, but not with alpha-5. Interacts with FLNA, FLNB, FLNC and RANBP9. Interacts with KRT1 in the presence of RACK1 and SRC. Interacts with JAML; integrin alpha-4/beta-1 may regulate leukocyte to endothelial cells adhesion by controlling JAML homodimerization. Interacts with RAB21. Interacts (via the cytoplasmic region) with RAB25 (via the hypervariable C-terminal region). Interacts with MYO10. Interacts with ITGB1BP1 (via C-terminal region); the interaction is a prerequisite for focal adhesion disassembly. Interacts with TLN1; the interaction is prevented by competitive binding of ITGB1BP1. Interacts with ACAP1; required for ITGB1 recycling. Interacts with ASAP3. Interacts with FERMT2; the interaction is inhibited in presence of ITGB1BP1. Interacts with DAB2. Interacts with FGR and HCK. Interacts with alpha-7A and alpha-7B in adult skeletal muscle. Interacts with alpha-7B in cardiomyocytes of adult heart. Interacts with EMP2; the interaction may be direct or indirect and ITGB1 has a heterodimer form. ITGA5:ITGB1 interacts with CCN3. ITGA4:ITGB1 is found in a ternary complex with CX3CR1 and CX3CL1. ITGA5:ITGB1 interacts with FBN1. ITGA5:ITGB1 acts as a receptor for fibronectin FN1 and mediates R-G-D-dependent cell adhesion to FN1. ITGA5:ITGB1 interacts with IL1B. Interacts with MDK. ITGA4:ITGB1 interacts with MDK; this interaction mediates MDK-induced osteoblast cells migration through PXN phosphorylation. ITGA6:ITGB1 interacts with MDK; this interaction mediates MDK-induced neurite-outgrowth. ITGA5:ITGB1 interacts with ACE2. Interacts with TMEM182 and LAMB1. Interacts with tensin TNS3; TNS3 also interacts with PEAK1, thus acting as an adapter molecule to bridge the association of PEAK1 with ITGB1. Interacts with tensin TNS4; the interaction displaces tensin TNS3 from the ITGB1 cytoplasmic tail and promotes ITGB1 stability. Integrin ITGA9:ITGB1 interacts with SPP1/OPN (via N-terminus). Integrin ITGA9:ITGB1 interacts with TNC/TNFN3 (via the 3rd Fibronectin type-III domain). Integrins ITGA4:ITGB1 and ITGA9:ITGB1 interact with SVEP1 (via Sushi domain 21); thereby inhibit Ca(2+) intracellular signaling and as a result repress vasocontraction. ITGA4:ITGB1 and ITGA5:ITGB1 interacts with SELP. Interacts with CD248. ITGA5:ITGB1 interacts with IGFBP1. ITGA4:ITGB1 interacts with BCAM. Interacts with ADGRG6.

It localises to the cell membrane. Its subcellular location is the cell projection. The protein resides in the invadopodium membrane. It is found in the ruffle membrane. The protein localises to the recycling endosome. It localises to the melanosome. Its subcellular location is the lamellipodium. The protein resides in the ruffle. It is found in the cell junction. The protein localises to the focal adhesion. Its function is as follows. Integrins alpha-1/beta-1, alpha-2/beta-1, alpha-10/beta-1 and alpha-11/beta-1 are receptors for collagen. Integrins alpha-1/beta-1 and alpha-2/beta-2 recognize the proline-hydroxylated sequence G-F-P-G-E-R in collagen. Integrins alpha-2/beta-1, alpha-3/beta-1, alpha-4/beta-1, alpha-5/beta-1, alpha-8/beta-1, alpha-10/beta-1, alpha-11/beta-1 and alpha-V/beta-1 are receptors for fibronectin. Alpha-4/beta-1 recognizes one or more domains within the alternatively spliced CS-1 and CS-5 regions of fibronectin. Integrin alpha-5/beta-1 is a receptor for fibrinogen. Integrin alpha-1/beta-1, alpha-2/beta-1, alpha-6/beta-1 and alpha-7/beta-1 are receptors for lamimin. Integrin alpha-6/beta-1 (ITGA6:ITGB1) is present in oocytes and is involved in sperm-egg fusion. Integrin alpha-4/beta-1 is a receptor for VCAM1 and recognizes the sequence Q-I-D-S in VCAM1. Integrin alpha-9/beta-1 is a receptor for VCAM1, cytotactin and osteopontin. It recognizes the sequence A-E-I-D-G-I-E-L in cytotactin. Integrin alpha-3/beta-1 is a receptor for epiligrin, thrombospondin and CSPG4. Integrin alpha-3/beta-1 provides a docking site for FAP (seprase) at invadopodia plasma membranes in a collagen-dependent manner and hence may participate in the adhesion, formation of invadopodia and matrix degradation processes, promoting cell invasion. Alpha-3/beta-1 may mediate with LGALS3 the stimulation by CSPG4 of endothelial cells migration. Integrin alpha-V/beta-1 is a receptor for vitronectin. Beta-1 integrins recognize the sequence R-G-D in a wide array of ligands. When associated with alpha-7/beta-1 integrin, regulates cell adhesion and laminin matrix deposition. Involved in promoting endothelial cell motility and angiogenesis. Involved in osteoblast compaction through the fibronectin fibrillogenesis cell-mediated matrix assembly process and the formation of mineralized bone nodules. May be involved in up-regulation of the activity of kinases such as PKC via binding to KRT1. Together with KRT1 and RACK1, serves as a platform for SRC activation or inactivation. Plays a mechanistic adhesive role during telophase, required for the successful completion of cytokinesis. ITGA4:ITGB1 binds to fractalkine (CX3CL1) and may act as its coreceptor in CX3CR1-dependent fractalkine signaling. ITGA4:ITGB1 and ITGA5:ITGB1 bind to PLA2G2A via a site (site 2) which is distinct from the classical ligand-binding site (site 1) and this induces integrin conformational changes and enhanced ligand binding to site 1. ITGA5:ITGB1 acts as a receptor for fibrillin-1 (FBN1) and mediates R-G-D-dependent cell adhesion to FBN1. ITGA5:ITGB1 is a receptor for IL1B and binding is essential for IL1B signaling. ITGA5:ITGB3 is a receptor for soluble CD40LG and is required for CD40/CD40LG signaling. Plays an important role in myoblast differentiation and fusion during skeletal myogenesis. ITGA9:ITGB1 may play a crucial role in SVEP1/polydom-mediated myoblast cell adhesion. Integrins ITGA9:ITGB1 and ITGA4:ITGB1 repress PRKCA-mediated L-type voltage-gated channel Ca(2+) influx and ROCK-mediated calcium sensitivity in vascular smooth muscle cells via their interaction with SVEP1, thereby inhibit vasocontraction. In Pongo abelii (Sumatran orangutan), this protein is Integrin beta-1 (ITGB1).